The sequence spans 773 residues: Kelch domain-containing protein 7A (773 aa).

The helical transmembrane segment at 23 to 40 (VVLSAAALLLVTAAYKLY) threads the bilayer. Residue Asn61 is glycosylated (N-linked (GlcNAc...) asparagine). Disordered regions lie at residues 64 to 99 (EALG…LDYS) and 114 to 207 (SEEA…APNG). Ser89 is modified (phosphoserine). Over residues 114–126 (SEEATRKGSDESQ) the composition is skewed to basic and acidic residues. Asn256 carries an N-linked (GlcNAc...) asparagine glycan. Positions 296–355 (KADSRPVPCPAALADAPSPGPGPEPLVTGAASRDEAANTAGGGASEAASPQPVASPSAPG) are disordered. Kelch repeat units follow at residues 323–370 (TGAA…ENPE), 488–534 (KRLV…LCTL), 537–585 (YLFV…ALEG), 586–628 (HLYA…ATVC), and 631–673 (EIFV…AVNG). The span at 340 to 354 (SEAASPQPVASPSAP) shows a compositional bias: low complexity. Ser361 carries the phosphoserine modification.

Its subcellular location is the membrane. In Mus musculus (Mouse), this protein is Kelch domain-containing protein 7A (Klhdc7a).